The following is a 382-amino-acid chain: Mating-type protein a-1 (382 aa).

Residues 116-184 constitute a DNA-binding region (HMG box); sequence IPRPPNAYIL…RLLLENPDYR (69 aa).

In terms of assembly, binds in vitro to DNA containing a specific core sequence 5'-CTTTG-3'.

The protein localises to the nucleus. In terms of biological role, mating type proteins are sequence specific DNA-binding proteins that act as master switches in yeast differentiation by controlling gene expression in a cell type-specific fashion. Transcriptional activator that induces the transcription of a-specific genes like mating factor mfa-1. Required for mating as an a-cell, blocking of heterokaryon formation (vegetative incompatibility) and for perithecium induction. This chain is Mating-type protein a-1 (mta-1), found in Neurospora crassa.